Reading from the N-terminus, the 201-residue chain is MIGAVLAGGRGRRFGGDKLLFRISGKPLLLYTIERLEQAEKIDEIVLVASKENAEKLRDFGHDVVVDELMIGPMGGIFTALSLGDAFVVAGDMPLLVPEFIDFIVERFEEAKKPACVPRWSNGYLEPLHAAYSSSFRDFLEERIKSRNYAINQAIRESDACYIEIEKLPEGWRESFFNVNTREDLRRLTPLRTRDNPDTLR.

Residues 6-8, Lys18, Asp67, and Asp92 each bind GTP; that span reads LAG. Position 92 (Asp92) interacts with Mg(2+).

This sequence belongs to the MobA family. The cofactor is Mg(2+).

Its subcellular location is the cytoplasm. It catalyses the reaction Mo-molybdopterin + GTP + H(+) = Mo-molybdopterin guanine dinucleotide + diphosphate. Functionally, transfers a GMP moiety from GTP to Mo-molybdopterin (Mo-MPT) cofactor (Moco or molybdenum cofactor) to form Mo-molybdopterin guanine dinucleotide (Mo-MGD) cofactor. This chain is Probable molybdenum cofactor guanylyltransferase, found in Thermococcus kodakarensis (strain ATCC BAA-918 / JCM 12380 / KOD1) (Pyrococcus kodakaraensis (strain KOD1)).